A 445-amino-acid polypeptide reads, in one-letter code: Trigger factor (445 aa).

The PPIase FKBP-type domain maps to 172 to 257; that stretch reads GDQVVIDFVG…VKSVNWAHMP (86 aa).

It belongs to the FKBP-type PPIase family. Tig subfamily.

The protein localises to the cytoplasm. It carries out the reaction [protein]-peptidylproline (omega=180) = [protein]-peptidylproline (omega=0). Functionally, involved in protein export. Acts as a chaperone by maintaining the newly synthesized protein in an open conformation. Functions as a peptidyl-prolyl cis-trans isomerase. This chain is Trigger factor, found in Polynucleobacter asymbioticus (strain DSM 18221 / CIP 109841 / QLW-P1DMWA-1) (Polynucleobacter necessarius subsp. asymbioticus).